Here is a 591-residue protein sequence, read N- to C-terminus: Paxillin (591 aa).

M1 carries the N-acetylmethionine modification. The LD motif 1 signature appears at 3–15; sequence DLDALLADLESTT. The segment at 17–139 is disordered; it reads HISKRPVFLS…SPTVMSSSLG (123 aa). Phosphotyrosine; by PTK6 is present on Y31. Over residues 45–54 the composition is skewed to pro residues; sequence VPPPVPPPPS. Position 83 is a phosphoserine (S83). Y88 carries the post-translational modification Phosphotyrosine. Positions 89-99 are enriched in low complexity; it reads SSSAKNSSASN. Position 106 is a phosphoserine (S106). The residue at position 118 (Y118) is a Phosphotyrosine; by PTK6. 3 positions are modified to phosphoserine: S119, S126, and S130. Polar residues predominate over residues 121-137; sequence PNKQKSAEPSPTVMSSS. Residue T132 is modified to Phosphothreonine. S137, S140, and S143 each carry phosphoserine. Residues 144-156 carry the LD motif 2 motif; sequence ELDRLLLELNAVQ. The interval 156-261 is disordered; that stretch reads QHSPPGFPAD…QQQTRISASS (106 aa). Y181 is subject to Phosphotyrosine. The short motif at 216-228 is the LD motif 3 element; that stretch reads SVESLLDELESSV. S230 is modified (phosphoserine). A compositionally biased stretch (polar residues) spans 236-261; sequence TVNQGEMSSPQRVTSSQQQTRISASS. A Phosphoserine; by CDK5 modification is found at S244. A phosphoserine mark is found at S250, S258, S261, S272, S303, S322, S332, and S340. The interval 262–315 is required for binding to PARVA and ILK; that stretch reads ATRELDELMASLSDFKMQGLEQRVDGERPWAAGWPPSSRQSSPEGQDEGGFMAQ. The LD motif 4 signature appears at 265 to 276; sequence ELDELMASLSDF. The interval 289–338 is disordered; that stretch reads RPWAAGWPPSSRQSSPEGQDEGGFMAQGKTGSSSPPGGLSKPGSQLDSML. Residues 315–334 show a composition bias toward low complexity; that stretch reads QGKTGSSSPPGGLSKPGSQL. Residues 333 to 345 carry the LD motif 5 motif; sequence QLDSMLGSLQSDL. 4 consecutive LIM zinc-binding domains span residues 356-415, 416-473, 474-533, and 534-591; these read GVCG…LFSP, RCYY…DMFA, PKCG…RRGS, and LCSG…KLFC. At S533 the chain carries Phosphoserine.

It belongs to the paxillin family. In terms of assembly, interacts in vitro with VCL/vinculin as well as to the SH3 domain of SRC and, when tyrosine phosphorylated, to the SH2 domain of CRK. Interacts with GIT1. Interacts with NUDT16L1/SDOS. Interacts with PTK2/FAK1. Interacts with PTK2B/PYK2. Interacts with ASAP2. Interacts with unphosphorylated ITGA4. Interacts with RNF5. Interacts with PDCD10. Interacts with NEK3, the interaction is prolactin-dependent. Interacts with PTK6. Interacts with TGFB1I1. Interacts with SORBS1. Interacts with PARVB. Interacts (via LD motif 4) with PARVA/PARVIN. Interacts (via LD motif 4) with ILK. Interacts (via cytoplasmic domain) with CEACAM1; the interaction is phosphotyrosyl-dependent. Interacts with LIMA1; this complex stabilizes actin dynamics. Interacts with CD36 (via C-terminus). Interacts with TRIM15. Interacts with PAK4; PAK4 acts as a scaffold to suppport PAXI phosphorylation at Ser-272. In terms of processing, phosphorylated by MAPK1/ERK2. Phosphorylated on tyrosine residues during integrin-mediated cell adhesion, embryonic development, fibroblast transformation and following stimulation of cells by mitogens. Phosphorylation at Ser-244 by CDK5 reduces its interaction with PTK2/FAK1 in matrix-cell focal adhesions (MCFA) during oligodendrocytes (OLs) differentiation. Phosphorylation at Tyr-31 and Tyr-118 by PTK6 promote the activation of RAC1 via CRK/CrKII, thereby promoting migration and invasion. Phosphorylation at Ser-250 by SLK is required for PXN redistribution and cell motility. Phosphorylation at Ser-272 promotes focal adhesion disassembly during cell migration.

It localises to the cytoplasm. Its subcellular location is the cytoskeleton. The protein resides in the cell junction. The protein localises to the focal adhesion. It is found in the cell cortex. Cytoskeletal protein involved in actin-membrane attachment at sites of cell adhesion to the extracellular matrix (focal adhesion). Recruits other proteins such as TRIM15 to focal adhesion. The sequence is that of Paxillin from Mus musculus (Mouse).